An 863-amino-acid polypeptide reads, in one-letter code: Bifunctional uridylyltransferase/uridylyl-removing enzyme (863 aa).

The tract at residues 1–328 is uridylyltransferase; the sequence is MLFSPTLSSL…SSNQDTVIDQ (328 aa). The interval 329-687 is uridylyl-removing; that stretch reads LDDDFQLINQ…ISNRFSLGGT (359 aa). The 123-residue stretch at 446–568 folds into the HD domain; sequence VDEHTLRVML…MQNQVRLDYL (123 aa). ACT domains follow at residues 688-764 and 794-863; these read EVFI…KLPA and EMEL…QQIR.

This sequence belongs to the GlnD family. Mg(2+) is required as a cofactor.

It catalyses the reaction [protein-PII]-L-tyrosine + UTP = [protein-PII]-uridylyl-L-tyrosine + diphosphate. It carries out the reaction [protein-PII]-uridylyl-L-tyrosine + H2O = [protein-PII]-L-tyrosine + UMP + H(+). Uridylyltransferase (UTase) activity is inhibited by glutamine, while glutamine activates uridylyl-removing (UR) activity. Its function is as follows. Modifies, by uridylylation and deuridylylation, the PII regulatory proteins (GlnB and homologs), in response to the nitrogen status of the cell that GlnD senses through the glutamine level. Under low glutamine levels, catalyzes the conversion of the PII proteins and UTP to PII-UMP and PPi, while under higher glutamine levels, GlnD hydrolyzes PII-UMP to PII and UMP (deuridylylation). Thus, controls uridylylation state and activity of the PII proteins, and plays an important role in the regulation of nitrogen assimilation and metabolism. This Haemophilus influenzae (strain ATCC 51907 / DSM 11121 / KW20 / Rd) protein is Bifunctional uridylyltransferase/uridylyl-removing enzyme.